The primary structure comprises 158 residues: SsrA-binding protein (158 aa).

Belongs to the SmpB family.

Its subcellular location is the cytoplasm. In terms of biological role, required for rescue of stalled ribosomes mediated by trans-translation. Binds to transfer-messenger RNA (tmRNA), required for stable association of tmRNA with ribosomes. tmRNA and SmpB together mimic tRNA shape, replacing the anticodon stem-loop with SmpB. tmRNA is encoded by the ssrA gene; the 2 termini fold to resemble tRNA(Ala) and it encodes a 'tag peptide', a short internal open reading frame. During trans-translation Ala-aminoacylated tmRNA acts like a tRNA, entering the A-site of stalled ribosomes, displacing the stalled mRNA. The ribosome then switches to translate the ORF on the tmRNA; the nascent peptide is terminated with the 'tag peptide' encoded by the tmRNA and targeted for degradation. The ribosome is freed to recommence translation, which seems to be the essential function of trans-translation. This Symbiobacterium thermophilum (strain DSM 24528 / JCM 14929 / IAM 14863 / T) protein is SsrA-binding protein.